Consider the following 306-residue polypeptide: Beta-lactamase (306 aa).

The tat-type signal signal peptide spans 1–34 (MDRTTARPNRRAVLATGVGAALAATAAAAGPAHA). Ser82 acts as the Acyl-ester intermediate in catalysis. 250–252 (KTG) is a substrate binding site.

Belongs to the class-A beta-lactamase family. Post-translationally, predicted to be exported by the Tat system. The position of the signal peptide cleavage has not been experimentally proven.

It catalyses the reaction a beta-lactam + H2O = a substituted beta-amino acid. The protein is Beta-lactamase (blaF) of Streptomyces fradiae (Streptomyces roseoflavus).